A 347-amino-acid chain; its full sequence is GTP 3',8-cyclase (347 aa).

Positions 10 to 242 (RLNRPIGVLR…ERINARWPLE (233 aa)) constitute a Radical SAM core domain. Arg19 provides a ligand contact to GTP. Cys26 and Cys30 together coordinate [4Fe-4S] cluster. Tyr32 contacts S-adenosyl-L-methionine. Cys33 is a binding site for [4Fe-4S] cluster. Arg65 contacts GTP. Gly69 contacts S-adenosyl-L-methionine. Thr104 lines the GTP pocket. Ser129 lines the S-adenosyl-L-methionine pocket. Position 178 (Lys178) interacts with GTP. Met212 contributes to the S-adenosyl-L-methionine binding site. Positions 275 and 278 each coordinate [4Fe-4S] cluster. 280–282 (RLR) contacts GTP. [4Fe-4S] cluster is bound at residue Cys292.

The protein belongs to the radical SAM superfamily. MoaA family. As to quaternary structure, monomer and homodimer. [4Fe-4S] cluster is required as a cofactor.

The catalysed reaction is GTP + AH2 + S-adenosyl-L-methionine = (8S)-3',8-cyclo-7,8-dihydroguanosine 5'-triphosphate + 5'-deoxyadenosine + L-methionine + A + H(+). Its pathway is cofactor biosynthesis; molybdopterin biosynthesis. In terms of biological role, catalyzes the cyclization of GTP to (8S)-3',8-cyclo-7,8-dihydroguanosine 5'-triphosphate. The chain is GTP 3',8-cyclase from Synechococcus sp. (strain CC9605).